Consider the following 201-residue polypeptide: Recombination protein RecR (201 aa).

The C4-type zinc-finger motif lies at 57-72 (CADCRTFTEQDVCNIC). Residues 81-176 (GQICVVESPA…SASRIAHGVP (96 aa)) form the Toprim domain.

It belongs to the RecR family.

Functionally, may play a role in DNA repair. It seems to be involved in an RecBC-independent recombinational process of DNA repair. It may act with RecF and RecO. The polypeptide is Recombination protein RecR (Enterobacter sp. (strain 638)).